A 1091-amino-acid chain; its full sequence is ATP-dependent helicase/deoxyribonuclease subunit B (1091 aa).

The protein belongs to the helicase family. AddB/RexB type 2 subfamily. As to quaternary structure, heterodimer of AddA and RexB. Mg(2+) is required as a cofactor.

Functionally, the heterodimer acts as both an ATP-dependent DNA helicase and an ATP-dependent, dual-direction single-stranded exonuclease. Recognizes the chi site generating a DNA molecule suitable for the initiation of homologous recombination. This subunit has 5' -&gt; 3' nuclease activity but not helicase activity. The polypeptide is ATP-dependent helicase/deoxyribonuclease subunit B (Streptococcus pneumoniae (strain CGSP14)).